Here is a 517-residue protein sequence, read N- to C-terminus: Sphingolipid C9-methyltransferase A (517 aa).

2 helical membrane-spanning segments follow: residues 58–78 and 80–100; these read LLIL…GGGL and TTIF…WSIA. S-adenosyl-L-methionine contacts are provided by residues 223–224, 286–291, and 316–317; these read YT, TLGRNQ, and YR. A glycan (N-linked (GlcNAc...) asparagine) is linked at Asn290. Residue Asn478 is glycosylated (N-linked (GlcNAc...) asparagine).

Belongs to the CFA/CMAS family.

It is found in the membrane. The catalysed reaction is a (4E,8E)-4-sphinga-4,8-dienine ceramide + S-adenosyl-L-methionine = a 9-methyl-(4E,8E)-sphinga-4,8-dienine ceramide + S-adenosyl-L-homocysteine + H(+). It functions in the pathway lipid metabolism; sphingolipid metabolism. Its function is as follows. Catalyzes methylation of the sphingoid base component of glucosylceramides (GluCers) at the C9-position. Sphingolipid C9-methylation requires 4,8-desaturated ceramides as substrates. Glucosylceramides play important roles in growth, differentiation and pathogenicity. The methyl group at the C9-position distinguishes fungal glucosylceramides from those of plants and animals and may thus play a role in host-pathogen interactions enabling the host to recognize the fungal attack and initiate specific defense responses. The chain is Sphingolipid C9-methyltransferase A from Emericella nidulans (strain FGSC A4 / ATCC 38163 / CBS 112.46 / NRRL 194 / M139) (Aspergillus nidulans).